Here is a 472-residue protein sequence, read N- to C-terminus: Serine incorporator 3 (472 aa).

The Extracellular segment spans residues 1-95 (MGAVLGVFSL…KECDVLVRYK (95 aa)). Asn-34 is a glycosylation site (N-linked (GlcNAc...) asparagine). A helical membrane pass occupies residues 96 to 116 (AVYRISFALAVFFFAFSLLML). At 117–131 (NVKTSKDPRAAIHNG) the chain is on the cytoplasmic side. The chain crosses the membrane as a helical span at residues 132-152 (FWFFKIAAIVGVMVGSFYIPG). At 153–158 (GHFNTA) the chain is on the extracellular side. A helical membrane pass occupies residues 159-179 (WFVIGMVGAAFFILIQLVLLV). Residues 180–202 (DFAHSWNESWVNRMEEGNPKCWY) are Cytoplasmic-facing. A helical transmembrane segment spans residues 203-223 (AALLSVTSLFYILSIIFAGLL). The Extracellular segment spans residues 224–238 (YTYYTKPDGCTENKF). Residues 239 to 259 (FISFNLILCVVISVLSIHPKI) traverse the membrane as a helical segment. At 260–328 (QEHQPRSGLL…APTPAVPLQS (69 aa)) the chain is on the cytoplasmic side. The helical transmembrane segment at 329–349 (GPSLNKENFIGLLVFVLSLSY) threads the bilayer. The Extracellular portion of the chain corresponds to 350 to 405 (SSIRNSSNSQVSKLTLSGSDSVILRDTAANGASDEEDGRPRRAVDNEREGVQYNYS). Asn-354 carries an N-linked (GlcNAc...) asparagine glycan. The residue at position 370 (Ser-370) is a Phosphoserine. Asn-403 carries an N-linked (GlcNAc...) asparagine glycan. Residues 406–426 (MFHLMLCSASLYIMMTLTNWY) traverse the membrane as a helical segment. Residues 427 to 445 (SPDANFQSMTSKWPAVWVK) are Cytoplasmic-facing. Residues 446–466 (ISSSWVCLLLYVWTLVAPLVL) traverse the membrane as a helical segment. At 467-472 (TNRDFS) the chain is on the extracellular side.

The protein belongs to the TDE1 family. Post-translationally, N-glycosylated.

It is found in the cell membrane. Its subcellular location is the golgi apparatus membrane. It carries out the reaction a 1,2-diacyl-sn-glycero-3-phospho-L-serine(in) = a 1,2-diacyl-sn-glycero-3-phospho-L-serine(out). The catalysed reaction is a 1,2-diacyl-sn-glycero-3-phosphocholine(in) = a 1,2-diacyl-sn-glycero-3-phosphocholine(out). It catalyses the reaction a 1,2-diacyl-sn-glycero-3-phosphoethanolamine(in) = a 1,2-diacyl-sn-glycero-3-phosphoethanolamine(out). Functionally, restriction factor required to restrict infectivity of gammaretroviruses: acts by inhibiting an early step of viral infection. Impairs the penetration of the viral particle into the cytoplasm. Non-ATP-dependent, non-specific lipid transporter for phosphatidylserine, phosphatidylcholine, and phosphatidylethanolamine. Functions as a scramblase that flips lipids in both directions across the membrane. Phospholipid scrambling results in gammaretroviral surface exposure of phosphatidylserine and loss of membrane asymmetry, which leads to loss of infectivity. The protein is Serine incorporator 3 (SERINC3) of Bos taurus (Bovine).